The following is a 154-amino-acid chain: MNWAKRSAFFLISVACFLADYYSKYWALTELGARKIVVNTYMNFILAFNHGAAFSFLARAGGWQRWLFAGFAGIVALWLIMTLLTKSHHWLMSVSYACILGGAVGNLYDRVVYGYVIDFIQWHYRTFYWPVFNLADVAITLGVILMLIAELHRR.

4 helical membrane-spanning segments follow: residues 8-28, 36-56, 66-86, and 88-108; these read AFFLISVACFLADYYSKYWAL, IVVNTYMNFILAFNHGAAFSF, WLFAGFAGIVALWLIMTLLTK, and HHWLMSVSYACILGGAVGNLY. Residues aspartate 118 and aspartate 136 contribute to the active site. Residues 129–149 form a helical membrane-spanning segment; that stretch reads WPVFNLADVAITLGVILMLIA.

This sequence belongs to the peptidase A8 family.

It localises to the cell inner membrane. The catalysed reaction is Release of signal peptides from bacterial membrane prolipoproteins. Hydrolyzes -Xaa-Yaa-Zaa-|-(S,diacylglyceryl)Cys-, in which Xaa is hydrophobic (preferably Leu), and Yaa (Ala or Ser) and Zaa (Gly or Ala) have small, neutral side chains.. The protein operates within protein modification; lipoprotein biosynthesis (signal peptide cleavage). This protein specifically catalyzes the removal of signal peptides from prolipoproteins. This is Lipoprotein signal peptidase from Dichelobacter nodosus (strain VCS1703A).